Here is a 461-residue protein sequence, read N- to C-terminus: uncharacterized protein (461 aa).

2 helical membrane-spanning segments follow: residues 18-38 (IITW…FLIY) and 124-144 (FIFL…ILSI). 2 consecutive PLD phosphodiesterase domains span residues 197–224 (YNYR…ADEY) and 374–401 (TPGF…DYRS).

Belongs to the phospholipase D family. Cardiolipin synthase subfamily.

It localises to the cell membrane. This is an uncharacterized protein from Streptococcus mutans serotype c (strain ATCC 700610 / UA159).